The chain runs to 150 residues: Nucleoside diphosphate kinase (150 aa).

ATP is bound by residues Lys-9, Phe-57, Arg-85, Thr-91, Arg-102, and Asn-112. The active-site Pros-phosphohistidine intermediate is the His-115.

The protein belongs to the NDK family. In terms of assembly, homotetramer. Mg(2+) serves as cofactor.

The protein resides in the cytoplasm. The catalysed reaction is a 2'-deoxyribonucleoside 5'-diphosphate + ATP = a 2'-deoxyribonucleoside 5'-triphosphate + ADP. It carries out the reaction a ribonucleoside 5'-diphosphate + ATP = a ribonucleoside 5'-triphosphate + ADP. Its function is as follows. Major role in the synthesis of nucleoside triphosphates other than ATP. The ATP gamma phosphate is transferred to the NDP beta phosphate via a ping-pong mechanism, using a phosphorylated active-site intermediate. The chain is Nucleoside diphosphate kinase from Symbiobacterium thermophilum (strain DSM 24528 / JCM 14929 / IAM 14863 / T).